Consider the following 274-residue polypeptide: Putative hydro-lyase Veis_4744 (274 aa).

This sequence belongs to the D-glutamate cyclase family.

This is Putative hydro-lyase Veis_4744 from Verminephrobacter eiseniae (strain EF01-2).